A 483-amino-acid chain; its full sequence is Glycogen synthase (483 aa).

Lys15 lines the ADP-alpha-D-glucose pocket.

This sequence belongs to the glycosyltransferase 1 family. Bacterial/plant glycogen synthase subfamily.

It catalyses the reaction [(1-&gt;4)-alpha-D-glucosyl](n) + ADP-alpha-D-glucose = [(1-&gt;4)-alpha-D-glucosyl](n+1) + ADP + H(+). It functions in the pathway glycan biosynthesis; glycogen biosynthesis. Its function is as follows. Synthesizes alpha-1,4-glucan chains using ADP-glucose. The chain is Glycogen synthase from Exiguobacterium sibiricum (strain DSM 17290 / CCUG 55495 / CIP 109462 / JCM 13490 / 255-15).